Reading from the N-terminus, the 398-residue chain is Na(+)/H(+) antiporter NhaA (398 aa).

Transmembrane regions (helical) follow at residues 21 to 41, 56 to 76, 94 to 114, 124 to 144, 153 to 173, 176 to 196, 201 to 221, 263 to 283, 284 to 304, 306 to 326, 333 to 353, and 367 to 387; these read AGGI…NSPL, LSVS…LVGL, VLPG…YVFI, GWAI…SLLG, VFLT…IAIF, SGLS…LVVL, VMTL…VLKS, IVPF…SLAG, LSLG…LVVG, LVGV…DLPA, MIGI…IGLL, and VGIL…LLMA.

The protein belongs to the NhaA Na(+)/H(+) (TC 2.A.33) antiporter family.

It is found in the cell inner membrane. It catalyses the reaction Na(+)(in) + 2 H(+)(out) = Na(+)(out) + 2 H(+)(in). Functionally, na(+)/H(+) antiporter that extrudes sodium in exchange for external protons. In Mesorhizobium japonicum (strain LMG 29417 / CECT 9101 / MAFF 303099) (Mesorhizobium loti (strain MAFF 303099)), this protein is Na(+)/H(+) antiporter NhaA.